Consider the following 84-residue polypeptide: CLAVATA3/ESR (CLE)-related protein 13 (84 aa).

A signal peptide spans 1 to 29 (MGRYTTDQVQVYVLVIVLCTFFSTLQARS). Residues 57 to 84 (KQVRDISGDRLSPAGPDPQHNGRSPPRK) form a disordered region. Hydroxyproline occurs at positions 69 and 72. Proline 72 carries an O-linked (Ara...) hydroxyproline glycan.

Belongs to the CLV3/ESR signal peptide family. The O-glycosylation (arabinosylation) of the hydroxyproline Pro-72 enhances binding affinity of the CLE13p peptide for its receptor. As to expression, expressed in young nodules throughout the central tissue. Expressed in the apical region of elongated nodules, corresponding to the meristematic and early infection zones.

The protein resides in the secreted. Its subcellular location is the extracellular space. Signaling peptide involved in the regulation of nodulation. Moves from root to shoot to function with the receptor kinase SUNN, in a signaling pathway that plays roles during cellular differentiation, both at the onset of nodulation, and later during nodule meristem development and subsequent homeostasis. Interacts with SUNN signaling to control nodule numbers. SUNN is involved in the autoregulation of nodulation (AON), a long distance systemic signaling from root to shoot and back again, which allows legumes to limit the number of root nodules formed based on available nitrogen and previous rhizobial colonization. In Medicago truncatula (Barrel medic), this protein is CLAVATA3/ESR (CLE)-related protein 13.